The sequence spans 410 residues: Neuroserpin (410 aa).

The first 16 residues, Met1–Val16, serve as a signal peptide directing secretion. 3 N-linked (GlcNAc...) asparagine glycosylation sites follow: Asn157, Asn321, and Asn401. Ser403 carries an O-linked (Xyl...) (chondroitin sulfate) serine glycan.

This sequence belongs to the serpin family. In terms of tissue distribution, detected in neurons in embryonic brain cortex (at protein level). During embryonic development mostly expressed in CNS. In adult expressed in brain and much less in spinal cord, heart, kidney and testis.

The protein localises to the secreted. The protein resides in the cytoplasmic vesicle. Its subcellular location is the secretory vesicle lumen. It localises to the perikaryon. Its function is as follows. Serine protease inhibitor that inhibits plasminogen activators and plasmin but not thrombin. May be involved in the formation or reorganization of synaptic connections as well as for synaptic plasticity in the adult nervous system. May protect neurons from cell damage by tissue-type plasminogen activator. The sequence is that of Neuroserpin (Serpini1) from Mus musculus (Mouse).